The chain runs to 511 residues: UPF0288 protein MK0796 (511 aa).

The protein belongs to the UPF0288 family.

The chain is UPF0288 protein MK0796 from Methanopyrus kandleri (strain AV19 / DSM 6324 / JCM 9639 / NBRC 100938).